A 449-amino-acid polypeptide reads, in one-letter code: MGRSRHHNKLKEGIFEAEITALSHDGRGIAKVDGKTTFIPFTLPGEVVKFEYTFTKAKFDEAKVVEYVKKSSNRVNPPCDHFQICRGCSLQHMSTDAQIEHKQQTLINQLKYIGNGVEPENILPPLRTSNTEGYRNKARLGVRYVSKKGKILVGFRERNGRFLADIDKCIVLNPLVGDKITEISSFIETLSIYQHIAQLEIAIDDTRPAMIVRHLEPFTNEDLEKLRSFAQENNYWIYLQSKGPDTIFRLYPQGDVEPKKLSYQPAAGIDIGFEPNDFTQVNNDINKKMIKRAIELLDISENDSIIDLFCGLGNFTLPISQHAKTVIGVEGEPTMVKRAKETADNNNITNVNFYAANLFESFEDKEWFNNFEYNKMLLDPPRAGAQEVCNNIEKFNVKRIVYVSCDTAALARDAGILVNTKGYKLISAGVMDMFPHTMHVESIAVFEKI.

Residues 1-66 enclose the TRAM domain; sequence MGRSRHHNKL…AKFDEAKVVE (66 aa). [4Fe-4S] cluster is bound by residues Cys-79, Cys-85, Cys-88, and Cys-169. Residues Gln-280, Phe-309, Asn-314, Glu-330, Asn-357, and Asp-379 each coordinate S-adenosyl-L-methionine. Residue Cys-405 is the Nucleophile of the active site.

It belongs to the class I-like SAM-binding methyltransferase superfamily. RNA M5U methyltransferase family. RlmD subfamily.

The catalysed reaction is uridine(1939) in 23S rRNA + S-adenosyl-L-methionine = 5-methyluridine(1939) in 23S rRNA + S-adenosyl-L-homocysteine + H(+). Its function is as follows. Catalyzes the formation of 5-methyl-uridine at position 1939 (m5U1939) in 23S rRNA. This Francisella tularensis subsp. tularensis (strain FSC 198) protein is 23S rRNA (uracil(1939)-C(5))-methyltransferase RlmD.